The following is a 297-amino-acid chain: 4-diphosphocytidyl-2-C-methyl-D-erythritol kinase (297 aa).

Residues K6 and D144 contribute to the active site.

It belongs to the GHMP kinase family. IspE subfamily.

It carries out the reaction 4-CDP-2-C-methyl-D-erythritol + ATP = 4-CDP-2-C-methyl-D-erythritol 2-phosphate + ADP + H(+). The protein operates within isoprenoid biosynthesis; isopentenyl diphosphate biosynthesis via DXP pathway; isopentenyl diphosphate from 1-deoxy-D-xylulose 5-phosphate: step 3/6. In terms of biological role, catalyzes the phosphorylation of the position 2 hydroxy group of 4-diphosphocytidyl-2C-methyl-D-erythritol. This chain is 4-diphosphocytidyl-2-C-methyl-D-erythritol kinase, found in Leptospira interrogans serogroup Icterohaemorrhagiae serovar copenhageni (strain Fiocruz L1-130).